The primary structure comprises 405 residues: L-rhamnonate dehydratase (405 aa).

Substrate-binding residues include histidine 33 and arginine 59. Aspartate 226, glutamate 252, and glutamate 280 together coordinate Mg(2+). Catalysis depends on histidine 329, which acts as the Proton acceptor. Glutamate 349 serves as a coordination point for substrate.

Belongs to the mandelate racemase/muconate lactonizing enzyme family. RhamD subfamily. Homooctamer; tetramer of dimers. Requires Mg(2+) as cofactor.

It carries out the reaction L-rhamnonate = 2-dehydro-3-deoxy-L-rhamnonate + H2O. Functionally, catalyzes the dehydration of L-rhamnonate to 2-keto-3-deoxy-L-rhamnonate (KDR). This is L-rhamnonate dehydratase from Escherichia coli O9:H4 (strain HS).